The chain runs to 601 residues: MEGSDLLLAGILFLFAAVVAVPIAARLGIGAVLGYLLAGIAIGPWGLGFISDVDEILHFSELGVVFLMFLIGLELNPSKLWKLRRSIFGIGAAQVLLSAVVLAGLLMLTDFAWQAAVVGGIGLAMSSTAMALQLMRDKGMNRTEGGQLGFSVLLFQDLAVIPALAMVPLLAGNGDEHPDWLKIGMKVLAFAVMLVGGRYLLRPVFRFIAGSGVREVFTAAALLLVLGSALFMDLLGLSMALGTFIAGILLAESEYRHELEIAIEPFKGLLLGLFFISVGMALNLGVLYTHILWVVMSVVVLVSVKMAVLYGLGRFQGLRRTERLPFAGVLSQGGEFAFVLFSSASSQKLFHNDQMALLLVTVTLSMMTTPLVMKGIDRLLARHFNAPDEDAEMPYVEDDKPQVIIVGFGRFGQVIGRLLMANKMRITVLERDISAVNLMRKYGYKVYYGDATELELLRAAGAESAQSIVVTCNDPEDTMRIVHLCQQHFPQMEILARARGRVEAHELLQAGVKQFSRETFSSALELGRKTLISLGMHPHQAQRAQLHFRRLDMRMLRELMPVHTDNAQISRVREARRELEEIFHREMQQERRQLDGWDEFE.

The next 13 membrane-spanning stretches (helical) occupy residues 5-25 (DLLL…PIAA), 29-49 (IGAV…GLGF), 55-75 (EILH…GLEL), 87-107 (IFGI…GLLM), 115-135 (AAVV…LQLM), 152-172 (VLLF…LLAG), 181-201 (LKIG…RYLL), 207-227 (FIAG…LVLG), 230-250 (LFMD…GILL), 268-288 (GLLL…GVLY), 291-311 (ILWV…VLYG), 324-344 (LPFA…FSSA), and 356-376 (ALLL…MKGI). The region spanning 400 to 519 (KPQVIIVGFG…AGVKQFSRET (120 aa)) is the RCK N-terminal domain.

The protein belongs to the monovalent cation:proton antiporter 2 (CPA2) transporter (TC 2.A.37) family. KefB subfamily. Interacts with the regulatory subunit KefG.

It is found in the cell inner membrane. Pore-forming subunit of a potassium efflux system that confers protection against electrophiles. Catalyzes K(+)/H(+) antiport. This is Glutathione-regulated potassium-efflux system protein KefB from Cronobacter sakazakii (strain ATCC BAA-894) (Enterobacter sakazakii).